The following is a 408-amino-acid chain: DNA polymerase processivity factor (408 aa).

Residues 344–353 (KKRRNLLTKR) carry the Nuclear localization signal motif.

It belongs to the herpesviridae DNA polymerase processivity factor family. Interacts with the DNA polymerase catalytic subunit. Interacts with the origin-binding protein.

It is found in the host nucleus. Functionally, plays an essential role in viral DNA replication by acting as the polymerase accessory subunit. Associates with the viral polymerase to increase its processivity and forms high-affinity direct interactions with DNA. Facilitates the origin-binding protein loading onto DNA thus increasing its ability to assemble into a functional complex capable of unwinding duplex DNA. The chain is DNA polymerase processivity factor from Varicella-zoster virus (strain Dumas) (HHV-3).